The sequence spans 327 residues: Melanoma-associated antigen B18 (327 aa).

Residues 1–19 show a composition bias toward basic residues; the sequence is MPRGQKSKLRAREKRRQAR. Residues 1–85 form a disordered region; that stretch reads MPRGQKSKLR…SSDDSEDTED (85 aa). Polar residues predominate over residues 46–70; that stretch reads MPTSPNMPMGEQSTFSHSYTSTSDQ. The 199-residue stretch at 91–289 folds into the MAGE domain; that stretch reads INHKVVLLVQ…DSFPTLYEAA (199 aa).

In terms of assembly, interacts with LNX1. As to expression, expressed in testis, stomach, large intestine, small intestine, spleen, lymph node, bone marrow lymphocytes and blood T-lymphocytes. Not detected in brain, heart, lung, liver or kidney (at protein level).

The protein resides in the cytoplasm. Functionally, may enhance ubiquitin ligase activity of RING-type zinc finger-containing E3 ubiquitin-protein ligases. Proposed to act through recruitment and/or stabilization of the Ubl-conjugating enzyme (E2) at the E3:substrate complex. The sequence is that of Melanoma-associated antigen B18 from Mus musculus (Mouse).